Consider the following 356-residue polypeptide: sn-glycerol-3-phosphate import ATP-binding protein UgpC (356 aa).

One can recognise an ABC transporter domain in the interval 4–235; that stretch reads LKLQAVTKSW…PASLFVASFI (232 aa). 37 to 44 serves as a coordination point for ATP; sequence GPSGCGKS.

This sequence belongs to the ABC transporter superfamily. sn-glycerol-3-phosphate importer (TC 3.A.1.1.3) family. In terms of assembly, the complex is composed of two ATP-binding proteins (UgpC), two transmembrane proteins (UgpA and UgpE) and a solute-binding protein (UgpB).

The protein resides in the cell inner membrane. The enzyme catalyses sn-glycerol 3-phosphate(out) + ATP + H2O = sn-glycerol 3-phosphate(in) + ADP + phosphate + H(+). Functionally, part of the ABC transporter complex UgpBAEC involved in sn-glycerol-3-phosphate (G3P) import. Responsible for energy coupling to the transport system. This chain is sn-glycerol-3-phosphate import ATP-binding protein UgpC, found in Shigella sonnei (strain Ss046).